Reading from the N-terminus, the 574-residue chain is Penicillin-binding protein activator LpoA (574 aa).

The N-terminal stretch at methionine 1–glycine 25 is a signal peptide. The N-palmitoyl cysteine moiety is linked to residue cysteine 26. Cysteine 26 is lipidated: S-diacylglycerol cysteine.

Belongs to the LpoA family. In terms of assembly, interacts with PBP1a.

Its subcellular location is the cell outer membrane. Its function is as follows. Regulator of peptidoglycan synthesis that is essential for the function of penicillin-binding protein 1A (PBP1a). This Mannheimia succiniciproducens (strain KCTC 0769BP / MBEL55E) protein is Penicillin-binding protein activator LpoA.